The primary structure comprises 171 residues: Small ribosomal subunit protein uS5 (171 aa).

The region spanning 16 to 79 (LREKMISVNR…EEARRKLVKI (64 aa)) is the S5 DRBM domain.

The protein belongs to the universal ribosomal protein uS5 family. Part of the 30S ribosomal subunit. Contacts proteins S4 and S8.

With S4 and S12 plays an important role in translational accuracy. In terms of biological role, located at the back of the 30S subunit body where it stabilizes the conformation of the head with respect to the body. The polypeptide is Small ribosomal subunit protein uS5 (Thiobacillus denitrificans (strain ATCC 25259 / T1)).